The sequence spans 424 residues: UDP-N-acetylglucosamine 1-carboxyvinyltransferase (424 aa).

22 to 23 provides a ligand contact to phosphoenolpyruvate; that stretch reads KN. Arginine 95 contacts UDP-N-acetyl-alpha-D-glucosamine. Cysteine 119 (proton donor) is an active-site residue. Cysteine 119 carries the post-translational modification 2-(S-cysteinyl)pyruvic acid O-phosphothioketal. Residues 124–128, aspartate 311, and isoleucine 333 each bind UDP-N-acetyl-alpha-D-glucosamine; that span reads RPVDQ.

It belongs to the EPSP synthase family. MurA subfamily.

It is found in the cytoplasm. The enzyme catalyses phosphoenolpyruvate + UDP-N-acetyl-alpha-D-glucosamine = UDP-N-acetyl-3-O-(1-carboxyvinyl)-alpha-D-glucosamine + phosphate. The protein operates within cell wall biogenesis; peptidoglycan biosynthesis. Functionally, cell wall formation. Adds enolpyruvyl to UDP-N-acetylglucosamine. The sequence is that of UDP-N-acetylglucosamine 1-carboxyvinyltransferase from Polaromonas naphthalenivorans (strain CJ2).